The primary structure comprises 255 residues: 5'-nucleotidase SurE (255 aa).

Positions 8, 9, 39, and 95 each coordinate a divalent metal cation.

It belongs to the SurE nucleotidase family. It depends on a divalent metal cation as a cofactor.

The protein localises to the cytoplasm. It carries out the reaction a ribonucleoside 5'-phosphate + H2O = a ribonucleoside + phosphate. Functionally, nucleotidase that shows phosphatase activity on nucleoside 5'-monophosphates. The polypeptide is 5'-nucleotidase SurE (Thermosipho melanesiensis (strain DSM 12029 / CIP 104789 / BI429)).